The primary structure comprises 83 residues: Cytochrome b559 subunit alpha (83 aa).

The chain crosses the membrane as a helical span at residues 21–35 (VIHSITIPSLFIAGW). Histidine 23 is a heme binding site.

It belongs to the PsbE/PsbF family. As to quaternary structure, heterodimer of an alpha subunit and a beta subunit. PSII is composed of 1 copy each of membrane proteins PsbA, PsbB, PsbC, PsbD, PsbE, PsbF, PsbH, PsbI, PsbJ, PsbK, PsbL, PsbM, PsbT, PsbX, PsbY, PsbZ, Psb30/Ycf12, at least 3 peripheral proteins of the oxygen-evolving complex and a large number of cofactors. It forms dimeric complexes. Requires heme b as cofactor.

It is found in the plastid. It localises to the chloroplast thylakoid membrane. This b-type cytochrome is tightly associated with the reaction center of photosystem II (PSII). PSII is a light-driven water:plastoquinone oxidoreductase that uses light energy to abstract electrons from H(2)O, generating O(2) and a proton gradient subsequently used for ATP formation. It consists of a core antenna complex that captures photons, and an electron transfer chain that converts photonic excitation into a charge separation. This Amborella trichopoda protein is Cytochrome b559 subunit alpha.